The sequence spans 350 residues: MGITKLAHLIHFDAPASMRSKEIGDYSGKIIALDTSIVVNQFRSALPGHLKLSPLAGLFYRTLAFLEHDIKPVFVLDGKPPHQKRAVLEKRAQSTGWSSSQSPNTGSAFNQECLRLLHLMGVPCIKAPGEAEALCAHLAKIGTVNAVASEDMDTLAFGGTVLLRQLNAKRDSEITEYSLPKLLEALQLKYEEFVDLCILLGCDYCDKIGGLGPSRALKLIKEHHTIEGVMEHVNRKTHPIPLNWQYKDARKLFFETPKIDDPVLAWSEPDEEGLVQFLCKEKPLKEERVRGRMKKFREMLLKRRKQREVNMQMGQTRQSRLEDFFPATRKRRAESAAVKESSGRKQFKIK.

The segment at 1 to 95 (MGITKLAHLI…AVLEKRAQST (95 aa)) is N-domain. Asp34 is a binding site for Mg(2+). Arg61 contacts DNA. Residues Asp77, Glu130, Glu132, Asp151, and Asp153 each coordinate Mg(2+). The interval 110–223 (NQECLRLLHL…SRALKLIKEH (114 aa)) is I-domain. Glu130 provides a ligand contact to DNA. Positions 201 and 203 each coordinate DNA. Asp203 is a binding site for Mg(2+). The interaction with PCNA stretch occupies residues 317–325 (RQSRLEDFF).

Belongs to the XPG/RAD2 endonuclease family. FEN1 subfamily. As to quaternary structure, interacts with PCNA. Three molecules of fen1 bind to one PCNA trimer with each molecule binding to one PCNA monomer. PCNA stimulates the nuclease activity without altering cleavage specificity. Requires Mg(2+) as cofactor. Phosphorylated. Phosphorylation upon DNA damage induces relocalization to the nuclear plasma.

It is found in the nucleus. The protein localises to the nucleolus. It localises to the nucleoplasm. The protein resides in the mitochondrion. Its function is as follows. Structure-specific nuclease with 5'-flap endonuclease and 5'-3' exonuclease activities involved in DNA replication and repair. During DNA replication, cleaves the 5'-overhanging flap structure that is generated by displacement synthesis when DNA polymerase encounters the 5'-end of a downstream Okazaki fragment. It enters the flap from the 5'-end and then tracks to cleave the flap base, leaving a nick for ligation. Also involved in the long patch base excision repair (LP-BER) pathway, by cleaving within the apurinic/apyrimidinic (AP) site-terminated flap. Acts as a genome stabilization factor that prevents flaps from equilibrating into structures that lead to duplications and deletions. Also possesses 5'-3' exonuclease activity on nicked or gapped double-stranded DNA, and exhibits RNase H activity. Also involved in replication and repair of rDNA and in repairing mitochondrial DNA. The chain is Probable flap endonuclease 1 homolog from Danio rerio (Zebrafish).